Reading from the N-terminus, the 759-residue chain is Subtilisin-like protease SBT3.16 (759 aa).

The first 33 residues, M1–A33, serve as a signal peptide directing secretion. A propeptide spans A34–K119 (activation peptide). One can recognise an Inhibitor I9 domain in the interval Y41–L118. Residues S124–A608 enclose the Peptidase S8 domain. The Charge relay system role is filled by D153. 2 N-linked (GlcNAc...) asparagine glycosylation sites follow: N186 and N209. The active-site Charge relay system is the H229. N371 carries an N-linked (GlcNAc...) asparagine glycan. S539 acts as the Charge relay system in catalysis. Residues N632 and N711 are each glycosylated (N-linked (GlcNAc...) asparagine).

This sequence belongs to the peptidase S8 family.

The protein localises to the secreted. The polypeptide is Subtilisin-like protease SBT3.16 (Arabidopsis thaliana (Mouse-ear cress)).